The following is a 305-amino-acid chain: NADH-cytochrome b5 reductase 1 (305 aa).

A helical transmembrane segment spans residues Val8–Tyr28. One can recognise an FAD-binding FR-type domain in the interval Asn44–Thr156. FAD contacts are provided by residues Asp136–Asn166 and Val175–Leu210.

Belongs to the flavoprotein pyridine nucleotide cytochrome reductase family. Requires FAD as cofactor. In terms of tissue distribution, widely expressed.

The protein resides in the membrane. The enzyme catalyses 2 Fe(III)-[cytochrome b5] + NADH = 2 Fe(II)-[cytochrome b5] + NAD(+) + H(+). In terms of biological role, NADH-cytochrome b5 reductases are involved in desaturation and elongation of fatty acids, cholesterol biosynthesis, drug metabolism, and, in erythrocyte, methemoglobin reduction. The sequence is that of NADH-cytochrome b5 reductase 1 (CYB5R1) from Homo sapiens (Human).